Consider the following 84-residue polypeptide: Metallothionein-like protein 2C (84 aa).

It belongs to the metallothionein superfamily. Type 15 family.

The protein localises to the cytoplasm. The protein resides in the cytosol. Its function is as follows. Metallothioneins have a high content of cysteine residues that bind various heavy metals. Acts as a reactive oxygen species (ROS) scavenger in the cytosol. Possesses superoxide anion and hydroxyl radical scavenging activities in vitro. Plays a role during root development, lateral root initiation and seed embryo germination, possibly by regulating levels of cytokinin. The sequence is that of Metallothionein-like protein 2C (MT2C) from Oryza sativa subsp. indica (Rice).